We begin with the raw amino-acid sequence, 208 residues long: ATP phosphoribosyltransferase (208 aa).

The protein belongs to the ATP phosphoribosyltransferase family. Short subfamily. Heteromultimer composed of HisG and HisZ subunits.

Its subcellular location is the cytoplasm. The enzyme catalyses 1-(5-phospho-beta-D-ribosyl)-ATP + diphosphate = 5-phospho-alpha-D-ribose 1-diphosphate + ATP. The protein operates within amino-acid biosynthesis; L-histidine biosynthesis; L-histidine from 5-phospho-alpha-D-ribose 1-diphosphate: step 1/9. Catalyzes the condensation of ATP and 5-phosphoribose 1-diphosphate to form N'-(5'-phosphoribosyl)-ATP (PR-ATP). Has a crucial role in the pathway because the rate of histidine biosynthesis seems to be controlled primarily by regulation of HisG enzymatic activity. The protein is ATP phosphoribosyltransferase of Hydrogenovibrio crunogenus (strain DSM 25203 / XCL-2) (Thiomicrospira crunogena).